The following is a 174-amino-acid chain: Thiol-disulfide oxidoreductase ResA (174 aa).

The helical; Signal-anchor for type II membrane protein transmembrane segment at 11–30 threads the bilayer; it reads TAILLVLLAAIGYTIYTNFF. Residues 36-174 form the Thioredoxin domain; it reads VAVGSTAPDF…IERHLESIKP (139 aa). Residues C74 and C77 are joined by a disulfide bond.

This sequence belongs to the thioredoxin family. ResA subfamily.

The protein localises to the cell membrane. The protein operates within protein modification; cytochrome c assembly. Thiol-disulfide oxidoreductase which is required in disulfide reduction during c-type cytochrome synthesis. May accept reducing equivalents from CcdA, leading to breakage of disulfide bonds in apocytochrome c; following this reduction heme can be covalently attached. This is Thiol-disulfide oxidoreductase ResA from Geobacillus kaustophilus (strain HTA426).